The chain runs to 463 residues: Chromosomal replication initiator protein DnaA (463 aa).

The tract at residues 1–83 (MSTNQIILTD…LQLFQHYNNT (83 aa)) is domain I, interacts with DnaA modulators. Residues 83–124 (TIKSIEIITKELPGTTQTVTELPTKTFADIGSSELNSENIFS) form a domain II region. The segment at 125 to 343 (TLDARFTFDN…GALNKVIAHS (219 aa)) is domain III, AAA+ region. ATP contacts are provided by glycine 171, glycine 173, lysine 174, and threonine 175. Residues 344–463 (NFTLKEITLE…INLLMKILQN (120 aa)) are domain IV, binds dsDNA.

The protein belongs to the DnaA family. As to quaternary structure, oligomerizes as a right-handed, spiral filament on DNA at oriC.

The protein localises to the cytoplasm. Functionally, plays an essential role in the initiation and regulation of chromosomal replication. ATP-DnaA binds to the origin of replication (oriC) to initiate formation of the DNA replication initiation complex once per cell cycle. Binds the DnaA box (a 9 base pair repeat at the origin) and separates the double-stranded (ds)DNA. Forms a right-handed helical filament on oriC DNA; dsDNA binds to the exterior of the filament while single-stranded (ss)DNA is stabiized in the filament's interior. The ATP-DnaA-oriC complex binds and stabilizes one strand of the AT-rich DNA unwinding element (DUE), permitting loading of DNA polymerase. After initiation quickly degrades to an ADP-DnaA complex that is not apt for DNA replication. Binds acidic phospholipids. The polypeptide is Chromosomal replication initiator protein DnaA (Rickettsia peacockii (strain Rustic)).